The primary structure comprises 874 residues: Trimodular acetylaranotin synthesis protein ataIMG (874 aa).

The interval 1–339 (MANLSGLSNR…DSGLLRASSI (339 aa)) is aminotransferase ataI. The disordered stretch occupies residues 20-39 (RFGFQTTQQAKPTESSKTPI). Residues 23 to 37 (FQTTQQAKPTESSKT) are compositionally biased toward polar residues. The interval 340 to 668 (SYNSMVKGSS…QERTEAEWRT (329 aa)) is O-methyltransferase ataM. Residue aspartate 625 participates in S-adenosyl-L-methionine binding. The segment at 669 to 874 (LAGRTGWEIR…VMEMGPQIGH (206 aa)) is glutathione S-transferase ataG. The GST N-terminal domain maps to 699–766 (KPLILAHELE…YLADRFDDGT (68 aa)). The 136-residue stretch at 739-874 (DPETKAEVIV…VMEMGPQIGH (136 aa)) folds into the GST C-terminal domain.

This sequence in the N-terminal section; belongs to the class-I pyridoxal-phosphate-dependent aminotransferase family. It in the 2nd section; belongs to the class I-like SAM-binding methyltransferase superfamily. Cation-independent O-methyltransferase family. In the C-terminal section; belongs to the GST superfamily. Pyridoxal 5'-phosphate is required as a cofactor.

The enzyme catalyses RX + glutathione = an S-substituted glutathione + a halide anion + H(+). It participates in mycotoxin biosynthesis. Its function is as follows. Trimodular acetylaranotin synthesis protein; part of the gene cluster that mediates the biosynthesis of acetylaranotin, a member of the epipolythiodioxopiperazine (ETP) class of toxins characterized by a disulfide-bridged cyclic dipeptide. The first step of acetylaranotin biosynthesis is performed by the NRPS ataP which produces diketopiperazine cyclo-L-Phe-L-Phe via the condensation of 2 phenylalanines (L-Phe). The ataC domain of ataTC then catalyzes the formation of bishydroxylation of cyclo-L-Phe-L-Phe. The glutathione S-transferase domain ataG in ataIMG further catalyzes the conjugation of two glutathiones to the bishydroxylated intermediate. Next, the dipeptidase ataJ removes the Glu residues. The following step is performed by the carbon sulfur lyase domain ataI of ataIMG which may convert the bis-cysteinyl adduct to yield an epidithiol intermediate. The ataT domain from ataTC then catalyzes the oxidation of the free dithiols, followed by a cyclization step catalyzed by the cytochrome P450 ataF. AtaF probably acts as an epoxidase to promote a dual epoxidation formation at C8 and C9 along with C8' and C9', followed by the spontaneous nucleophilic attack of the amide nitrogens N10 and N10' to yield an intermediate with the pyrrolidine partial structure. The final steps of acetylaranotin biosynthesis involve the acetylation and ring rearrangement of an epitetrathiodiketopiperazine intermediate to produce acetylaranotin. AtaH probably catalyzes the acetylation of epitetrathiodiketopiperazine to produce a diacetate and ataY is responsible for the formation of the dihydrooxepin moiety that converts the diacetate intermediate to acetylaranotin via acetylapoaranotin. Both enzymes could function independently in the absence of the other. The acetylaranotin bis-thiomethyltransferase ataS located outside of acetylaranotin gene cluster is the main thiomethyltransferase responsible for converting acetylaranotin and its related intermediates to their methylated forms. The polypeptide is Trimodular acetylaranotin synthesis protein ataIMG (Aspergillus terreus (strain NIH 2624 / FGSC A1156)).